Reading from the N-terminus, the 403-residue chain is Phosphoglycerate kinase (403 aa).

Substrate is bound by residues 21 to 23 (DFN), R36, 59 to 62 (HVGR), R119, and R154. Residues K207, G299, E330, and 357-360 (GGDA) contribute to the ATP site.

Belongs to the phosphoglycerate kinase family. As to quaternary structure, monomer.

It localises to the cytoplasm. The catalysed reaction is (2R)-3-phosphoglycerate + ATP = (2R)-3-phospho-glyceroyl phosphate + ADP. The protein operates within carbohydrate degradation; glycolysis; pyruvate from D-glyceraldehyde 3-phosphate: step 2/5. The chain is Phosphoglycerate kinase (pgk) from Chlamydia trachomatis serovar D (strain ATCC VR-885 / DSM 19411 / UW-3/Cx).